The sequence spans 162 residues: Caveolin-2 (162 aa).

Topologically, residues 1-86 (MGLETEKADV…FEISKYVVYK (86 aa)) are cytoplasmic. At Tyr-19 the chain carries Phosphotyrosine; by SRC. Phosphoserine is present on residues Ser-20 and Ser-23. Phosphotyrosine; by SRC is present on Tyr-27. Phosphoserine is present on Ser-36. The segment at residues 87–107 (FLTVFLAIPLAFAAGILFATL) is an intramembrane region (helical). Over 108 to 162 (SCLHIWIIMPFVKTCLMVLPSVQTVWKTVTDVVIAPLCASVGRSFSSVSLQLSHD) the chain is Cytoplasmic.

The protein belongs to the caveolin family. In terms of assembly, monomer or homodimer. Interacts with CAV1; the interaction forms a stable heterooligomeric complex that is required for targeting to lipid rafts and for caveolae formation. Tyrosine phosphorylated forms do not form heterooligomers with the Tyr-19-phosphorylated form existing as a monomer or dimer, and the Tyr-27-form as a monomer only. Interacts (tyrosine phosphorylated form) with the SH2 domain-containing proteins, RASA1, NCK1 and SRC. Interacts (tyrosine phosphorylated form) with INSR, the interaction (Tyr-27-phosphorylated form) is increased on insulin stimulation. Interacts (Tyr-19 phosphorylated form) with MAPK1 (phosphorylated form); the interaction, promoted by insulin, leads to nuclear location and MAPK1 activation. Interacts with STAT3; the interaction is increased on insulin-induced tyrosine phosphorylation leading to STAT activation. Post-translationally, phosphorylated on serine and tyrosine residues. CAV1 promotes phosphorylation on Ser-23 which then targets the complex to the plasma membrane, lipid rafts and caveolae. Phosphorylation on Ser-36 appears to modulate mitosis in endothelial cells. Phosphorylation on both Tyr-19 and Tyr-27 is required for insulin-induced 'Ser-727' phosphorylation of STAT3 and its activation. Phosphorylation on Tyr-19 is required for insulin-induced phosphorylation of MAPK1 and DNA binding of STAT3. Tyrosine phosphorylation is induced by both EGF and insulin (By. similarity).

It localises to the nucleus. The protein resides in the cytoplasm. The protein localises to the golgi apparatus membrane. Its subcellular location is the cell membrane. It is found in the membrane. It localises to the caveola. Its function is as follows. May act as a scaffolding protein within caveolar membranes. Interacts directly with G-protein alpha subunits and can functionally regulate their activity. Acts as an accessory protein in conjunction with CAV1 in targeting to lipid rafts and driving caveolae formation. The Ser-36 phosphorylated form has a role in modulating mitosis in endothelial cells. Positive regulator of cellular mitogenesis of the MAPK signaling pathway. Required for the insulin-stimulated nuclear translocation and activation of MAPK1 and STAT3, and the subsequent regulation of cell cycle progression. This Loxodonta africana (African elephant) protein is Caveolin-2 (CAV2).